We begin with the raw amino-acid sequence, 286 residues long: 33 kDa chaperonin (286 aa).

Intrachain disulfides connect cysteine 225-cysteine 227 and cysteine 258-cysteine 261.

It belongs to the HSP33 family. Under oxidizing conditions two disulfide bonds are formed involving the reactive cysteines. Under reducing conditions zinc is bound to the reactive cysteines and the protein is inactive.

It is found in the cytoplasm. In terms of biological role, redox regulated molecular chaperone. Protects both thermally unfolding and oxidatively damaged proteins from irreversible aggregation. Plays an important role in the bacterial defense system toward oxidative stress. The sequence is that of 33 kDa chaperonin from Shewanella loihica (strain ATCC BAA-1088 / PV-4).